The primary structure comprises 206 residues: MSRWKAKHDKEHYYKLAKKQNYRSRASYKLKQLDKKYSLLKPDYNVVDLGAAPGGWSQVVAETIGEEGKGQIISVDLEYIKPIDHEAYTGVKGDFTTKETQDIIIELIDGKADVVLSDAAPKLTGIKDIDNFRAYDLSMAVIEIIDNILKNNGNLIMKAFQGEAYQEIIKNLKKKFRNVKTTKPNSSRKRSAEMYVIARGFRGSKK.

S-adenosyl-L-methionine contacts are provided by G54, W56, D76, D94, and D118. The active-site Proton acceptor is K158.

Belongs to the class I-like SAM-binding methyltransferase superfamily. RNA methyltransferase RlmE family.

The protein resides in the cytoplasm. It catalyses the reaction uridine(2552) in 23S rRNA + S-adenosyl-L-methionine = 2'-O-methyluridine(2552) in 23S rRNA + S-adenosyl-L-homocysteine + H(+). Its function is as follows. Specifically methylates the uridine in position 2552 of 23S rRNA at the 2'-O position of the ribose in the fully assembled 50S ribosomal subunit. The protein is Ribosomal RNA large subunit methyltransferase E of Methanosphaera stadtmanae (strain ATCC 43021 / DSM 3091 / JCM 11832 / MCB-3).